Here is a 307-residue protein sequence, read N- to C-terminus: 2-carboxy-1,4-naphthoquinone phytyltransferase (307 aa).

Helical transmembrane passes span 27 to 47 (MYTV…GLTG), 51 to 71 (GDVF…INLS), 98 to 118 (LVFL…MSMS), 125 to 145 (TVLE…GPPF), 147 to 167 (LGYL…LAIA), 177 to 197 (FSWN…IILF), 223 to 243 (LGSQ…AIGV), and 284 to 304 (FIAV…YGWA).

The protein belongs to the MenA family. Type 2 subfamily.

The protein resides in the cell inner membrane. The enzyme catalyses 2-carboxy-1,4-naphthoquinone + phytyl diphosphate + H(+) = demethylphylloquinone + CO2 + diphosphate. It participates in cofactor biosynthesis; phylloquinone biosynthesis. Involved in the synthesis of phylloquinone (vitamin K1). Catalyzes the transfer of a prenyl chain to 2-carboxy-1,4-naphthoquinone. The protein is 2-carboxy-1,4-naphthoquinone phytyltransferase of Synechocystis sp. (strain ATCC 27184 / PCC 6803 / Kazusa).